Consider the following 347-residue polypeptide: Tsukushi (347 aa).

The signal sequence occupies residues 1 to 19; sequence MASLLCLFFSLLGLAAIGA. The LRRNT domain occupies 20 to 61; the sequence is VKNCHPQCRCEVETFGLFDSFSLTKVDCSRIGPGNTPVPIPL. 10 LRR repeats span residues 62–83, 88–109, 112–133, 135–156, 160–175, 185–205, 206–227, 230–252, 255–277, and 280–301; these read DTSH…MLSG, TLVS…AFSK, YLET…CFTG, PLVE…LFTT, DLPI…LTSI, YIKS…LNGI, PLQY…AFDS, ELVH…AFRS, NLQA…VFSG, and SLQE…VFMQ. N-linked (GlcNAc...) asparagine glycosylation occurs at N285.

As to quaternary structure, forms a ternary complex with chordin/CHRD and BMP4.

Its subcellular location is the secreted. Functionally, contributes to various developmental events through its interactions with multiple signaling pathways. Dorsalizing factor which functions as an inhibitor of bone morphogenetic proteins during gastrulation. This Danio rerio (Zebrafish) protein is Tsukushi (tsku).